A 548-amino-acid chain; its full sequence is T-complex protein 1 subunit theta (548 aa).

The residue at position 2 (Ala2) is an N-acetylalanine. Ser23 carries the post-translational modification Phosphoserine. Phosphotyrosine is present on Tyr30. ADP contacts are provided by Tyr47 and Gly48. Asp99 lines the Mg(2+) pocket. ADP-binding residues include Gly100, Thr101, Asn102, and Phe103. The ATP site is built by Gly100, Thr101, and Asn102. Ser162 carries the phosphoserine modification. ADP contacts are provided by Met169, Ser170, and Lys171. ATP contacts are provided by Ser170 and Lys171. Residues Lys224, Lys254, and Lys260 each participate in a glycyl lysine isopeptide (Lys-Gly) (interchain with G-Cter in SUMO2) cross-link. A phosphoserine mark is found at Ser269 and Ser317. An N6-acetyllysine mark is found at Lys318 and Lys400. Gly412 is a binding site for ADP. Gly412 is a binding site for ATP. A Glycyl lysine isopeptide (Lys-Gly) (interchain with G-Cter in SUMO1) cross-link involves residue Lys459. N6-acetyllysine is present on Lys466. Asp499 is a binding site for ADP. ATP-binding residues include Asp499 and Lys504. Tyr505 carries the post-translational modification Phosphotyrosine. The segment at 529-548 (PAGGPKPPSGKKDWDDDQND) is disordered. Residue Lys534 forms a Glycyl lysine isopeptide (Lys-Gly) (interchain with G-Cter in SUMO2) linkage. A Phosphoserine modification is found at Ser537. Lys539 participates in a covalent cross-link: Glycyl lysine isopeptide (Lys-Gly) (interchain with G-Cter in SUMO2).

Belongs to the TCP-1 chaperonin family. Component of the chaperonin-containing T-complex (TRiC), a hexadecamer composed of two identical back-to-back stacked rings enclosing a protein folding chamber. Each ring is made up of eight different subunits: TCP1/CCT1, CCT2, CCT3, CCT4, CCT5, CCT6A/CCT6, CCT7, CCT8. Interacts with PACRG. Interacts with DNAAF4. Interacts with synaptic plasticity regulator PANTS.

The protein localises to the cytoplasm. It is found in the cytoskeleton. It localises to the microtubule organizing center. The protein resides in the centrosome. Its subcellular location is the cilium basal body. It carries out the reaction ATP + H2O = ADP + phosphate + H(+). Functionally, component of the chaperonin-containing T-complex (TRiC), a molecular chaperone complex that assists the folding of actin, tubulin and other proteins upon ATP hydrolysis. The TRiC complex mediates the folding of WRAP53/TCAB1, thereby regulating telomere maintenance. As part of the TRiC complex may play a role in the assembly of BBSome, a complex involved in ciliogenesis regulating transports vesicles to the cilia. In Mus musculus (Mouse), this protein is T-complex protein 1 subunit theta (Cct8).